The primary structure comprises 297 residues: Transmembrane protein 169 (297 aa).

Positions 1 to 85 are disordered; that stretch reads MEEPTAVEGQ…KEEEGDDFLD (85 aa). Residues 1–159 lie on the Extracellular side of the membrane; sequence MEEPTAVEGQ…CQMGADRGPH (159 aa). Residues 61–85 show a composition bias toward acidic residues; sequence KTDEEPGESEGGDQPKEEEGDDFLD. A helical transmembrane segment spans residues 160–180; that stretch reads VVLWTLICLPVVFILSFVVSF. At 181–210 the chain is on the cytoplasmic side; sequence YYGTITWYNIFLVYNEERTFWHKISYCPCL. A helical membrane pass occupies residues 211 to 231; it reads VLFYPVLIMAMASSLGLYAAV. At 232-297 the chain is on the extracellular side; that stretch reads VQLSWSWEAW…PIQEVETSTV (66 aa).

It is found in the membrane. The sequence is that of Transmembrane protein 169 (TMEM169) from Homo sapiens (Human).